Here is a 361-residue protein sequence, read N- to C-terminus: Actin maturation protease (361 aa).

The tract at residues 1–75 is disordered; sequence MTSPCSFPLK…PPPPPLPSAV (75 aa). Composition is skewed to pro residues over residues 24–33 and 52–72; these read NIPPPLPLNP and PLPPPPPPPAPPPPPPPPPLP. Residues 134-254 are peptidase C39-like; that stretch reads SCIQEGPQCG…WAVSAGVLIG (121 aa). Cysteine 142 is an active-site residue.

Belongs to the ACTMAP family. As to quaternary structure, interacts (via N-terminus) with PFN2 isoforms 1/IIa and 2/IIb; the interactions may facilitate efficient cleavage of the acetylated N-terminus of immature actin. Interacts with PFN1.

It localises to the cytoplasm. It carries out the reaction N-terminal N(alpha)-acetyl-L-methionyl-L-aspartyl-[protein] + H2O = N-terminal L-aspartyl-[protein] + N-acetyl-L-methionine. The enzyme catalyses N-terminal N(alpha)-acetyl-L-methionyl-L-glutamyl-[protein] + H2O = N-terminal L-glutamyl-[protein] + N-acetyl-L-methionine. The catalysed reaction is N-terminal N(alpha)-acetyl-L-cysteinyl-L-aspartyl-[protein] + H2O = N-terminal L-aspartyl-[protein] + N-acetyl-L-cysteine. It catalyses the reaction N-terminal N(alpha)-acetyl-L-cysteinyl-L-glutamyl-[protein] + H2O = N-terminal L-glutamyl-[protein] + N-acetyl-L-cysteine. Its function is as follows. Actin maturation protease that specifically mediates the cleavage of immature acetylated N-terminal actin, thereby contributing to actin maturation. Cleaves N-terminal acetylated methionine of immature cytoplasmic beta- and gamma-actins Actb and Actg1 after translation. Cleaves N-terminal acetylated cysteine of muscle alpha-actins Acta1, Actc1 and Acta2 after canonical removal of N-terminal methionine. This chain is Actin maturation protease, found in Mus musculus (Mouse).